A 211-amino-acid polypeptide reads, in one-letter code: Suppressor of cytokine signaling 1 (211 aa).

Residues 1–53 are disordered; sequence MVAHNQVAADNAVSTAAEPRRRPEPSSSSSSSPAAPARPRPCPAVPAPAPGDT. Residues 25-35 are compositionally biased toward low complexity; that stretch reads PSSSSSSSPAA. Over residues 36-49 the composition is skewed to pro residues; the sequence is PARPRPCPAVPAPA. The tract at residues 55–66 is kinase inhibitory region (KIR); that stretch reads FRTFRSHADYRR. The segment at 67-78 is extended SH2 subdomain (ESS); that stretch reads ITRASALLDACG. In terms of domain architecture, SH2 spans 79–174; that stretch reads FYWGPLSVHG…PLRQRRVRPL (96 aa). The SOCS box domain maps to 161-210; the sequence is MLGAPLRQRRVRPLQELCRQRIVATVGRENLARIPLNPVLRDYLSSFPFQ. The interval 173–182 is interaction with Elongin BC complex; sequence PLQELCRQRI.

This sequence belongs to the SOCS1 family. As to quaternary structure, interacts with multiple activated signaling proteins of the tyrosine kinase signaling pathway including JAK family kinases, TEC, KIT, GRB2 and VAV. Binding to JAKs is mediated through the KIR and SH2 domains to a phosphorylated tyrosine residue within the JAK JH1 domain. Binds the SH3 domain of GRB2 via diproline determinants in the N-terminus, and the N-terminal regulatory domain of VAV. Interacts with the Elongin BC complex (ELOB and ELOC). Component of an ECS CBC(SOCS1) E3 ubiquitin-protein ligase complex which contains Elongin BC, CUL5, RBX1 and SOCS1. Interacts (via SH2 domain and SOCS box) with TRIM8. Interacts with AXL, CUL2 and FGFR3. Interacts with INSR. Interacts with TRIM8. Interacts with DCUN1D1. Interacts with IFNGR1. In terms of tissue distribution, expressed in all tissues with high expression in spleen, small intestine and peripheral blood leukocytes.

It localises to the nucleus. The protein localises to the cytoplasmic vesicle. Its pathway is protein modification; protein ubiquitination. Functionally, essential negative regulator of type I and type II interferon (IFN) signaling, as well as that of other cytokines, including IL2, IL4, IL6 and leukemia inhibitory factor (LIF). Downregulates cytokine signaling by inhibiting the JAK/STAT signaling pathway. Acts by binding to JAK proteins and to IFNGR1 and inhibiting their kinase activity. In vitro, suppresses Tec protein-tyrosine activity. Regulates IFN-gamma (IFNG)-mediated sensory neuron survival. Probable substrate recognition component of an ECS (Elongin BC-CUL2/5-SOCS-box protein) E3 ubiquitin ligase complex which mediates the ubiquitination and subsequent proteasomal degradation of target proteins. The protein is Suppressor of cytokine signaling 1 (SOCS1) of Homo sapiens (Human).